We begin with the raw amino-acid sequence, 445 residues long: UDP-N-acetylmuramoylalanine--D-glutamate ligase (445 aa).

Gly117 to Thr123 provides a ligand contact to ATP.

Belongs to the MurCDEF family.

Its subcellular location is the cytoplasm. The enzyme catalyses UDP-N-acetyl-alpha-D-muramoyl-L-alanine + D-glutamate + ATP = UDP-N-acetyl-alpha-D-muramoyl-L-alanyl-D-glutamate + ADP + phosphate + H(+). It participates in cell wall biogenesis; peptidoglycan biosynthesis. Functionally, cell wall formation. Catalyzes the addition of glutamate to the nucleotide precursor UDP-N-acetylmuramoyl-L-alanine (UMA). In Neisseria meningitidis serogroup A / serotype 4A (strain DSM 15465 / Z2491), this protein is UDP-N-acetylmuramoylalanine--D-glutamate ligase.